The sequence spans 260 residues: 5'-nucleotidase SurE (260 aa).

A divalent metal cation-binding residues include aspartate 8, aspartate 9, serine 39, and asparagine 91.

It belongs to the SurE nucleotidase family. The cofactor is a divalent metal cation.

It localises to the cytoplasm. The enzyme catalyses a ribonucleoside 5'-phosphate + H2O = a ribonucleoside + phosphate. Nucleotidase that shows phosphatase activity on nucleoside 5'-monophosphates. The sequence is that of 5'-nucleotidase SurE from Acidovorax ebreus (strain TPSY) (Diaphorobacter sp. (strain TPSY)).